Consider the following 226-residue polypeptide: ATP synthase F(0) complex subunit a (226 aa).

6 helical membrane passes run 5-25, 68-88, 97-117, 138-158, 160-180, and 189-209; these read LFAS…LIIL, WSLM…LGLL, QLSM…TTGF, IPML…ALAV, LTAN…ATLA, and TLII…VALI.

Belongs to the ATPase A chain family. In terms of assembly, component of the ATP synthase complex composed at least of ATP5F1A/subunit alpha, ATP5F1B/subunit beta, ATP5MC1/subunit c (homooctomer), MT-ATP6/subunit a, MT-ATP8/subunit 8, ATP5ME/subunit e, ATP5MF/subunit f, ATP5MG/subunit g, ATP5MK/subunit k, ATP5MJ/subunit j, ATP5F1C/subunit gamma, ATP5F1D/subunit delta, ATP5F1E/subunit epsilon, ATP5PF/subunit F6, ATP5PB/subunit b, ATP5PD/subunit d, ATP5PO/subunit OSCP. ATP synthase complex consists of a soluble F(1) head domain (subunits alpha(3) and beta(3)) - the catalytic core - and a membrane F(0) domain - the membrane proton channel (subunits c, a, 8, e, f, g, k and j). These two domains are linked by a central stalk (subunits gamma, delta, and epsilon) rotating inside the F1 region and a stationary peripheral stalk (subunits F6, b, d, and OSCP). Interacts with DNAJC30; interaction is direct.

Its subcellular location is the mitochondrion inner membrane. It catalyses the reaction H(+)(in) = H(+)(out). Functionally, subunit a, of the mitochondrial membrane ATP synthase complex (F(1)F(0) ATP synthase or Complex V) that produces ATP from ADP in the presence of a proton gradient across the membrane which is generated by electron transport complexes of the respiratory chain. ATP synthase complex consist of a soluble F(1) head domain - the catalytic core - and a membrane F(1) domain - the membrane proton channel. These two domains are linked by a central stalk rotating inside the F(1) region and a stationary peripheral stalk. During catalysis, ATP synthesis in the catalytic domain of F(1) is coupled via a rotary mechanism of the central stalk subunits to proton translocation. With the subunit c (ATP5MC1), forms the proton-conducting channel in the F(0) domain, that contains two crucial half-channels (inlet and outlet) that facilitate proton movement from the mitochondrial intermembrane space (IMS) into the matrix. Protons are taken up via the inlet half-channel and released through the outlet half-channel, following a Grotthuss mechanism. This Gorilla gorilla gorilla (Western lowland gorilla) protein is ATP synthase F(0) complex subunit a.